Reading from the N-terminus, the 1252-residue chain is Plasma membrane calcium-transporting ATPase mca-1 (1252 aa).

Residues 1–121 (MQKSQNVTAV…VRLVLDACKD (121 aa)) lie on the Cytoplasmic side of the membrane. A helical transmembrane segment spans residues 122–142 (PTLVILVLSGFINLALSFYEP). Residues 143 to 180 (TSAAEDATQHLVNATTAAILANGTFMSTTEAPSEGHGT) are Extracellular-facing. N-linked (GlcNAc...) asparagine glycosylation is found at Asn-155 and Asn-164. A helical membrane pass occupies residues 181-201 (AWIEGVAILLCVIVVVLVTAV). Residues 202–376 (NDYSKERQFR…KSVLQAKLSK (175 aa)) lie on the Cytoplasmic side of the membrane. Residues 330 to 361 (DDSTSTSSSSSSSSSSSGSSSNGSSDSSKSGD) are disordered. Positions 333 to 357 (TSTSSSSSSSSSSSGSSSNGSSDSS) are enriched in low complexity. A helical membrane pass occupies residues 377–397 (LALQIIYCGTTIAIIALIVLV). Topologically, residues 398 to 422 (TRFCLDHYVFEKNEFSLVDIQMFVK) are extracellular. The helical transmembrane segment at 423 to 443 (FFIIAVTILVISIPEGLPLAI) threads the bilayer. The Ca(2+) site is built by Val-432, Ile-435, and Glu-437. At 444–879 (ALALTYSVRK…GRNVYDSISK (436 aa)) the chain is on the cytoplasmic side. The active-site 4-aspartylphosphate intermediate is the Asp-479. 2 residues coordinate Mg(2+): Asp-479 and Thr-481. Positions 481, 553, 612, 733, 734, 735, 792, and 798 each coordinate ATP. Asp-822 contributes to the Mg(2+) binding site. Residue Asn-825 coordinates ATP. Residues 880–900 (FLQFQLTVNVVAVITAFVGAV) traverse the membrane as a helical segment. A Ca(2+)-binding site is contributed by Asn-888. The Extracellular segment spans residues 901-908 (TVSDSPLK). Residues 909-929 (AVHMLWINLIMDTLASLALAT) traverse the membrane as a helical segment. Residues Asn-916 and Asp-920 each coordinate Ca(2+). Topologically, residues 930–960 (EQPTDELLERKPYGRKKSLISRTMVKNILCH) are cytoplasmic. The chain crosses the membrane as a helical span at residues 961 to 981 (ALYQLIIIFVIFFYGDTIFGI). Residues 982–989 (KTGLYAPL) lie on the Extracellular side of the membrane. Residues 990-1010 (FAPPSQHFTLVFNAFVMMTVF) form a helical membrane-spanning segment. Topologically, residues 1011–1035 (NEINARKVHGERNVFKGLASNRVFC) are cytoplasmic. Residues 1036–1056 (VIWVTTFIAQIIIVQFGGAWF) form a helical membrane-spanning segment. The Extracellular portion of the chain corresponds to 1057–1065 (STAPLTLQQ). The chain crosses the membrane as a helical span at residues 1066-1086 (WIVCLVLGFSTLIWGQIVATI). The Cytoplasmic portion of the chain corresponds to 1087 to 1252 (PSKKLPKAWK…NVDMEDIELN (166 aa)). The calmodulin-binding subdomain A stretch occupies residues 1124 to 1142 (LRRSGKSLWVRGMFIIGNH). Positions 1143–1152 (LRVLRAFGME) are calmodulin-binding subdomain B. The tract at residues 1181-1252 (YRHQKHQEKK…NVDMEDIELN (72 aa)) is disordered.

The protein belongs to the cation transport ATPase (P-type) (TC 3.A.3) family. Type IIB subfamily. Interacts with calmodulin.

Its subcellular location is the cell membrane. It catalyses the reaction Ca(2+)(in) + ATP + H2O = Ca(2+)(out) + ADP + phosphate + H(+). Its function is as follows. Catalyzes the hydrolysis of ATP coupled with the transport of calcium across a membrane. The sequence is that of Plasma membrane calcium-transporting ATPase mca-1 from Caenorhabditis elegans.